The following is a 491-amino-acid chain: Acetyl-coenzyme A carboxylase carboxyl transferase subunit beta (491 aa).

Residues leucine 132–leucine 491 form the CoA carboxyltransferase N-terminal domain. Zn(2+) contacts are provided by cysteine 136, cysteine 139, cysteine 155, and cysteine 158. Residues cysteine 136–cysteine 158 form a C4-type zinc finger. Residues glutamate 252–leucine 262 are compositionally biased toward basic and acidic residues. 2 disordered regions span residues glutamate 252 to arginine 273 and aspartate 279 to aspartate 298. Acidic residues predominate over residues serine 284 to aspartate 298.

Belongs to the AccD/PCCB family. Acetyl-CoA carboxylase is a heterohexamer composed of biotin carboxyl carrier protein, biotin carboxylase and 2 subunits each of ACCase subunit alpha and ACCase plastid-coded subunit beta (accD). The cofactor is Zn(2+).

It is found in the plastid. The enzyme catalyses N(6)-carboxybiotinyl-L-lysyl-[protein] + acetyl-CoA = N(6)-biotinyl-L-lysyl-[protein] + malonyl-CoA. Its pathway is lipid metabolism; malonyl-CoA biosynthesis; malonyl-CoA from acetyl-CoA: step 1/1. Its function is as follows. Component of the acetyl coenzyme A carboxylase (ACC) complex. Biotin carboxylase (BC) catalyzes the carboxylation of biotin on its carrier protein (BCCP) and then the CO(2) group is transferred by the transcarboxylase to acetyl-CoA to form malonyl-CoA. This Cuscuta gronovii (Common dodder) protein is Acetyl-coenzyme A carboxylase carboxyl transferase subunit beta.